The primary structure comprises 455 residues: DNA repair protein RadA (455 aa).

The segment at 12–29 (CSECGSYSPKWLGQCPGC) adopts a C4-type zinc-finger fold. 95-102 (GEPGIGKS) serves as a coordination point for ATP. The short motif at 252–256 (KNRFG) is the RadA KNRFG motif element. The lon-protease-like stretch occupies residues 351–455 (DVFLSIAGGL…TIKDAVRLLQ (105 aa)).

The protein belongs to the RecA family. RadA subfamily.

DNA-dependent ATPase involved in processing of recombination intermediates, plays a role in repairing DNA breaks. Stimulates the branch migration of RecA-mediated strand transfer reactions, allowing the 3' invading strand to extend heteroduplex DNA faster. Binds ssDNA in the presence of ADP but not other nucleotides, has ATPase activity that is stimulated by ssDNA and various branched DNA structures, but inhibited by SSB. Does not have RecA's homology-searching function. The polypeptide is DNA repair protein RadA (Chlamydia muridarum (strain MoPn / Nigg)).